We begin with the raw amino-acid sequence, 1111 residues long: Zinc finger protein GLI1 (1111 aa).

Positions 52–78 are disordered; it reads GYGAARETSSCTEGSLFPPPPPPRSSV. Residues 123-127 are interaction with SUFU; sequence SYGHL. 5 consecutive C2H2-type zinc fingers follow at residues 238 to 263, 271 to 298, 304 to 328, 334 to 359, and 365 to 390; these read TDCRWDGCSQEFDSQEQLVHHINSEH, FVCHWGGCSRELRPFKAQYMLVVHMRRH, HKCTFEGCRKSYSRLENLKTHLRSH, YMCEQEGCSKAFSNASDRAKHQNRTH, and YVCKLPGCTKRYTDPSSLRKHVKTVH. Positions 286–294 are interaction with DNA; the sequence is KAQYMLVVH. Interaction with DNA stretches follow at residues 348–353 and 378–384; these read ASDRAK and DPSSLRK. Residues 378–487 are disordered; it reads DPSSLRKHVK…EDLSSLDEGP (110 aa). Residues 416-431 are compositionally biased toward basic and acidic residues; sequence EPKREREGGSGREESR. Residues 439 to 465 show a composition bias toward polar residues; it reads MPQQSPGAQSSCSSDHSPAGSAANTDS. Residue Lys-520 is modified to N6-acetyllysine. Disordered stretches follow at residues 528–583, 598–649, 673–692, and 832–891; these read GAPV…LPGL, ARGS…RAAD, TGRNFDPHHPTSVYSPQPPS, and PCLN…SSHS. Positions 546 to 562 are enriched in low complexity; it reads SSSSSMSSAYTVSRRSS. Over residues 640–649 the composition is skewed to basic and acidic residues; sequence RASDPARAAD. The span at 855-870 shows a compositional bias: pro residues; that stretch reads LPQPQYPQSGPYPQPP. Residue Lys-1008 forms a Glycyl lysine isopeptide (Lys-Gly) (interchain with G-Cter in SUMO2) linkage. A disordered region spans residues 1064–1093; the sequence is LSPPLSHEQGDSSKNTPSPSGPPNMAVGNM.

It belongs to the GLI C2H2-type zinc-finger protein family. As to quaternary structure, interacts with KIF7. Interacts with STK36. Interacts with ZIC1; the interaction enhances transcription activation. Interacts with SUFU; this inhibits transcriptional activation by GLI1. In terms of processing, phosphorylated in vitro by ULK3. Post-translationally, acetylation at Lys-520 down-regulates transcriptional activity. Deacetylated by HDAC1. Ubiquitinated by the CRL2(FEM1B) complex, suppressing GLI1 transcriptional activator activity.

It is found in the cytoplasm. The protein localises to the nucleus. Acts as a transcriptional activator. Binds to the DNA consensus sequence 5'-GACCACCCA-3'. Regulates the transcription of specific genes during normal development. Plays a role in craniofacial development and digital development, as well as development of the central nervous system and gastrointestinal tract. Mediates SHH signaling. Plays a role in cell proliferation and differentiation via its role in SHH signaling. This is Zinc finger protein GLI1 (Gli1) from Mus musculus (Mouse).